A 1744-amino-acid chain; its full sequence is Tanabin (1744 aa).

The tract at residues 1 to 12 (MEGYLASVSLGE) is head. The segment at 8–48 (VSLGEESTQMWSLNKRLEAYLSRVKALEEENELLRKEIHSL) is coil 1A. In terms of domain architecture, IF rod spans 13 to 320 (ESTQMWSLNK…SLLEAESTRI (308 aa)). Residues 49–60 (RSSKSERCWKKK) form a linker 1 region. A coil 1B region spans residues 61–156 (HHEEMMKLRD…RDHEEEKALM (96 aa)). Residues 157–179 (EEEIASFSQRLENFRVAPVAFKP) are linker 12. The tract at residues 180–193 (VEVDDYARKLSEIW) is coil 2A. A linker 2 region spans residues 194-199 (QGAVEE). The interval 200 to 314 (YKSEVSVLEA…EVATYRSLLE (115 aa)) is coil 2B. Positions 315–1744 (AESTRIYTDY…KKALRWKRMF (1430 aa)) are tail. Basic and acidic residues-rich tracts occupy residues 341–371 (RRRQ…KNEL) and 785–815 (HSHH…DKSS). 7 disordered regions span residues 341–372 (RRRQ…NELQ), 785–816 (HSHH…KSSE), 976–996 (EENQ…DIEE), 1032–1093 (SMED…QQED), 1340–1470 (DSDL…FGDV), 1485–1506 (SGLA…SMEN), and 1560–1722 (AREK…LNGH). The span at 980–990 (LSENEGNQNFG) shows a compositional bias: polar residues. Residues 1034–1056 (EDEEEQNNPETEDNIGLEQESDQ) are compositionally biased toward acidic residues. Residues 1074 to 1086 (VVFKPEDMSDKSE) are compositionally biased toward basic and acidic residues. Acidic residues predominate over residues 1340–1351 (DSDLESTEEQVQ). A compositionally biased stretch (basic and acidic residues) spans 1352-1367 (ETERIPFKPEDSKMEN). Residues 1368-1377 (ENSESEESVD) show a composition bias toward acidic residues. Basic and acidic residues predominate over residues 1386-1398 (HKSEEFEISKDYQ). Over residues 1412-1421 (LEDEFEDLTE) the composition is skewed to acidic residues. Positions 1423-1432 (PDVHEEHQNN) are enriched in basic and acidic residues. Over residues 1433–1442 (DDSGASTFIT) the composition is skewed to polar residues. A compositionally biased stretch (basic and acidic residues) spans 1445-1460 (DEDKEREVRESVSKDE). A compositionally biased stretch (acidic residues) spans 1496–1505 (DNEESEDSME). Polar residues-rich tracts occupy residues 1576–1586 (EFTNENQSASP), 1597–1621 (EDSV…TSIS), and 1629–1639 (SNISTTEQSST). Positions 1680 to 1691 (RSEDEELDDEGS) are enriched in acidic residues. Residues 1698–1709 (NDEKANGEHKDV) show a composition bias toward basic and acidic residues.

Belongs to the intermediate filament family. Growth cones of embryonic vertebrate neurons.

This is Tanabin from Xenopus laevis (African clawed frog).